The sequence spans 124 residues: Holo-[acyl-carrier-protein] synthase (124 aa).

Mg(2+) is bound by residues Asp8 and Glu56.

It belongs to the P-Pant transferase superfamily. AcpS family. The cofactor is Mg(2+).

It is found in the cytoplasm. The enzyme catalyses apo-[ACP] + CoA = holo-[ACP] + adenosine 3',5'-bisphosphate + H(+). Functionally, transfers the 4'-phosphopantetheine moiety from coenzyme A to a Ser of acyl-carrier-protein. The sequence is that of Holo-[acyl-carrier-protein] synthase from Nitratidesulfovibrio vulgaris (strain DP4) (Desulfovibrio vulgaris).